Consider the following 137-residue polypeptide: ATP synthase epsilon chain, chloroplastic (137 aa).

Belongs to the ATPase epsilon chain family. F-type ATPases have 2 components, CF(1) - the catalytic core - and CF(0) - the membrane proton channel. CF(1) has five subunits: alpha(3), beta(3), gamma(1), delta(1), epsilon(1). CF(0) has three main subunits: a, b and c.

It is found in the plastid. It localises to the chloroplast thylakoid membrane. In terms of biological role, produces ATP from ADP in the presence of a proton gradient across the membrane. This chain is ATP synthase epsilon chain, chloroplastic, found in Pinus koraiensis (Korean pine).